The primary structure comprises 675 residues: Nexilin (675 aa).

Positions 1–66 (MNDISQKAEI…RKEQYIRERE (66 aa)) are disordered. Lys16 carries the phosphoserine modification. The segment covering 27-66 (GKGDVKDKFEAMQRAREERNQRRSRDEKQRRKEQYIRERE) has biased composition (basic and acidic residues). Ser80 is modified (phosphoserine). A disordered region spans residues 105–127 (RFAEMEKQRQEEQRKRTEEERKR). Ser241 bears the Phosphoserine mark. Disordered regions lie at residues 254–278 (LERQ…EEEK) and 313–336 (SFEE…ARRR). Phosphoserine occurs at positions 357 and 365. Thr370 is modified (phosphothreonine). 2 disordered regions span residues 487–513 (ENFH…KVNM) and 551–584 (LQKK…APWF). 2 positions are modified to phosphoserine: Ser564 and Ser569. The 89-residue stretch at 582-670 (PWFKKPLKNT…GSAASTCILT (89 aa)) folds into the Ig-like domain.

Interacts with F-actin. Abundantly expressed in heart and skeletal muscle, and at lower levels in placenta, lung, liver and pancreas. Also expressed in HeLaS3 and MOLT-4 cell lines.

The protein resides in the cytoplasm. Its subcellular location is the cytoskeleton. The protein localises to the cell junction. It is found in the adherens junction. It localises to the myofibril. The protein resides in the sarcomere. Its subcellular location is the z line. In terms of biological role, involved in regulating cell migration through association with the actin cytoskeleton. Has an essential role in the maintenance of Z line and sarcomere integrity. In Homo sapiens (Human), this protein is Nexilin.